The chain runs to 435 residues: Acetyltransferase atnC (435 aa).

Helical transmembrane passes span Ala10–Ile30, Tyr40–Leu60, and Ser68–Leu88. N-linked (GlcNAc...) asparagine glycosylation is present at Asn203. The next 3 helical transmembrane spans lie at Phe306–Ser326, Ile333–Tyr353, and Val370–Pro390. A glycan (N-linked (GlcNAc...) asparagine) is linked at Asn406. Residues Leu407 to Val427 form a helical membrane-spanning segment.

This sequence belongs to the wax synthase family.

Its subcellular location is the membrane. It functions in the pathway secondary metabolite biosynthesis; terpenoid biosynthesis. Functionally, acetyltransferase; part of the gene cluster that mediates the biosynthesis of the meroterpenoids arthripenoids. The pathway begins with the HR-PKS atnH that catalyzes two chain-extension steps to form a reduced triketide, which then primes the SAT domain in the NR-PKS atnG to initiate three more cycles of extension to give a linear hexaketide corresponding to the polyketide part of arthripenoids. The FAD-dependent monooxygenase atnJ then performs an oxidative decarboxylation at C11 of the atnH/atnG product, via an electrophilic aromatic hydroxylation with concomitant ipso-decarboxylation. The membrane-bound polyprenyl transferase atnF then introduces a farnesyl group before the FAD-dependent monooxygenase atnK functions as the first epoxidase on terminal C12'-C13' olefin, followed by a second epoxidation on C7'-C8' catalyzed by atnA. The terpene cyclase/mutase atnI then initiates the sequential tricyclic ring formation through protonation of the terminal epoxide and catalyzes the regioselective and stereoselective 6/6/6-tricyclic ring formation. The cytochrome P450 monooxygenase atnM is responsible for hydroxylating both C1' and C10'. The next steps may involve ketoreduction and acetyl transfer by the ketoreductase atnB and the acetyltransferase atnC, and lead to the production of arthripenoid B, the final biosynthetic product of the atn cluster. The hydroquinone moiety in arthripenoid B is prone to undergo spontaneous oxidation to afford a benzoquinone compound, a key intermediate for generating structure diversity. For instance, addition of a cysteine followed by ring contraction gives arthripenoid A, tautomerization gives the main product arthripenoid C, addition of a molecular of water or amine affords arthripenoid D or E, respectively, and loss of one water forms arthripenoid F. This is Acetyltransferase atnC from Arthrinium sp.